Reading from the N-terminus, the 66-residue chain is Large ribosomal subunit protein bL35 (66 aa).

Belongs to the bacterial ribosomal protein bL35 family.

The protein is Large ribosomal subunit protein bL35 of Moorella thermoacetica (strain ATCC 39073 / JCM 9320).